We begin with the raw amino-acid sequence, 443 residues long: Ribulose bisphosphate carboxylase large chain (443 aa).

Substrate is bound by residues asparagine 89 and threonine 139. Residue lysine 141 is the Proton acceptor of the active site. Lysine 143 contributes to the substrate binding site. The Mg(2+) site is built by lysine 167, aspartate 169, and glutamate 170. At lysine 167 the chain carries N6-carboxylysine. The Proton acceptor role is filled by histidine 260. The substrate site is built by arginine 261, histidine 293, and serine 345.

It belongs to the RuBisCO large chain family. Type I subfamily. In terms of assembly, heterohexadecamer of 8 large chains and 8 small chains; disulfide-linked. The disulfide link is formed within the large subunit homodimers. Mg(2+) serves as cofactor. The disulfide bond which can form in the large chain dimeric partners within the hexadecamer appears to be associated with oxidative stress and protein turnover.

It localises to the plastid. The protein localises to the chloroplast. The enzyme catalyses 2 (2R)-3-phosphoglycerate + 2 H(+) = D-ribulose 1,5-bisphosphate + CO2 + H2O. It carries out the reaction D-ribulose 1,5-bisphosphate + O2 = 2-phosphoglycolate + (2R)-3-phosphoglycerate + 2 H(+). Functionally, ruBisCO catalyzes two reactions: the carboxylation of D-ribulose 1,5-bisphosphate, the primary event in carbon dioxide fixation, as well as the oxidative fragmentation of the pentose substrate in the photorespiration process. Both reactions occur simultaneously and in competition at the same active site. This is Ribulose bisphosphate carboxylase large chain from Sesamum indicum (Oriental sesame).